Consider the following 167-residue polypeptide: NAD(P)H-quinone oxidoreductase subunit I, chloroplastic (167 aa).

2 4Fe-4S ferredoxin-type domains span residues 55-84 and 95-124; these read GRIH…VDWK and LNYS…MTEE. [4Fe-4S] cluster is bound by residues cysteine 64, cysteine 67, cysteine 70, cysteine 74, cysteine 104, cysteine 107, cysteine 110, and cysteine 114.

It belongs to the complex I 23 kDa subunit family. As to quaternary structure, NDH is composed of at least 16 different subunits, 5 of which are encoded in the nucleus. The cofactor is [4Fe-4S] cluster.

The protein localises to the plastid. Its subcellular location is the chloroplast thylakoid membrane. It carries out the reaction a plastoquinone + NADH + (n+1) H(+)(in) = a plastoquinol + NAD(+) + n H(+)(out). The enzyme catalyses a plastoquinone + NADPH + (n+1) H(+)(in) = a plastoquinol + NADP(+) + n H(+)(out). In terms of biological role, NDH shuttles electrons from NAD(P)H:plastoquinone, via FMN and iron-sulfur (Fe-S) centers, to quinones in the photosynthetic chain and possibly in a chloroplast respiratory chain. The immediate electron acceptor for the enzyme in this species is believed to be plastoquinone. Couples the redox reaction to proton translocation, and thus conserves the redox energy in a proton gradient. The protein is NAD(P)H-quinone oxidoreductase subunit I, chloroplastic of Atropa belladonna (Belladonna).